The primary structure comprises 356 residues: Aromatic dipeptide epimerase (356 aa).

Residues Thr-136 and 161-163 contribute to the substrate site; that span reads KVK. Asp-191, Glu-219, and Asp-244 together coordinate Mg(2+). Substrate is bound by residues Lys-268 and 320 to 322; that span reads DLD.

Belongs to the mandelate racemase/muconate lactonizing enzyme family. Mg(2+) serves as cofactor.

Has epimerase activity with a variety of hydrophobic dipeptides (in vitro). Enzyme activity is highest with L-Phe-L-Tyr, but is still relatively low, suggesting that L-Phe-L-Tyr is not the physiological substrate. This is Aromatic dipeptide epimerase from Herpetosiphon aurantiacus (strain ATCC 23779 / DSM 785 / 114-95).